A 401-amino-acid polypeptide reads, in one-letter code: Probable tRNA sulfurtransferase (401 aa).

Positions 60-165 constitute a THUMP domain; that stretch reads EPIIEKLKTV…QDGTYVTCRD (106 aa). ATP-binding positions include 183–184, 208–209, Arg265, Gly287, and Gln296; these read ML and HF.

It belongs to the ThiI family.

The protein resides in the cytoplasm. The catalysed reaction is [ThiI sulfur-carrier protein]-S-sulfanyl-L-cysteine + a uridine in tRNA + 2 reduced [2Fe-2S]-[ferredoxin] + ATP + H(+) = [ThiI sulfur-carrier protein]-L-cysteine + a 4-thiouridine in tRNA + 2 oxidized [2Fe-2S]-[ferredoxin] + AMP + diphosphate. It catalyses the reaction [ThiS sulfur-carrier protein]-C-terminal Gly-Gly-AMP + S-sulfanyl-L-cysteinyl-[cysteine desulfurase] + AH2 = [ThiS sulfur-carrier protein]-C-terminal-Gly-aminoethanethioate + L-cysteinyl-[cysteine desulfurase] + A + AMP + 2 H(+). The protein operates within cofactor biosynthesis; thiamine diphosphate biosynthesis. In terms of biological role, catalyzes the ATP-dependent transfer of a sulfur to tRNA to produce 4-thiouridine in position 8 of tRNAs, which functions as a near-UV photosensor. Also catalyzes the transfer of sulfur to the sulfur carrier protein ThiS, forming ThiS-thiocarboxylate. This is a step in the synthesis of thiazole, in the thiamine biosynthesis pathway. The sulfur is donated as persulfide by IscS. The chain is Probable tRNA sulfurtransferase from Geobacillus kaustophilus (strain HTA426).